Here is a 901-residue protein sequence, read N- to C-terminus: MAAQNEQRPERIKTTPYLEGDVLSSDSGPLLSVFALQEIMQKVRQVQADYMTATREVDFTVPDVQQILDDIKALAAAQVYKIVKVPSTSFRHIVTQSRDRVLRVDTYYEEMSQVGDVITEDEPEKFYSTIIKKVRFIRGKGSFILHDIPARDHRGMEVAEPEVLGVEFKNVLPVLTAEHRAMIQNALDGSIIENGNVATRDVDVFIGACSEPFYRIYNRFQGYIEAVQLQELRNSIGWLERLGQRKRITYSQEVLTDFRRQDMIWVLALQLPVNPQVVWDVPRSSIANLIMNIATCLPTGEYIAPNPRISSITLTQRITTTGPFAILTGSTPTAQQLNDVRKIYLALMFPGQIILDLKIDPGERMDPAVRMVAGVVGHLLFTAGGRFTNLTQNMARQLDIALNDYLLYMYNTRVQVNYGPTGEPLDFQIGRNQYDCNVFRADFATGTGYNGWATIDVEYRDPAPYVHAQRYIRYCGIDSRELINPTTYGIGMTYHCYNEMLRMLVAAGKDSEAAYFRSMLPFHMVRFARINQIINEDLHSVFSLPDDMFNALLPDLIAGAHQNADPVVLDVSWISLWFAFNRSFEPTHRNEMLEIAPLIESVYASELSVMKVDMRHLSLMQRRFPDVLIQARPSHFWKAVLNDSPEAVKAVMNLSHSHNFINIRDMMRWVLLPSLQPSLKLVLEEEAWAAANDFEDLMLTDQVYMHRDMLPEPRLDDIERFRQEGFYYTNMLEAPPEIDRVVQYTYEIARLQANMGQFRAALRRIMDDDDWIGFGGVLRTVRVKFFDARPPDDILQGLPFSYDTNEKGGLSYATIKYATETTIFYLIYNVEFSNTPDSLVLINPTYTMTKVFINKRIVERVRVGQILAVLNRRFVAYKGKMRIMDITQSLKMGTKLAAPTV.

The protein belongs to the orbivirus VP3 family.

It localises to the virion. The VP3 protein is one of the five proteins (with VP1, VP4, VP6 and VP7) which form the inner capsid of the virus. The polypeptide is Core protein VP3 (Segment-3) (Bluetongue virus 1 (isolate South Africa) (BTV 1)).